Consider the following 621-residue polypeptide: Chaperone protein HtpG (621 aa).

The segment at 1-341 (MSNQEYTFQT…SEDLPLNVSR (341 aa)) is a; substrate-binding. The b stretch occupies residues 342 to 547 (EILQQNKILA…GDEPNAMMAN (206 aa)). The c stretch occupies residues 548-621 (WMRQMGQSVP…RLNSVLLKAL (74 aa)).

This sequence belongs to the heat shock protein 90 family. In terms of assembly, homodimer.

The protein localises to the cytoplasm. Molecular chaperone. Has ATPase activity. The polypeptide is Chaperone protein HtpG (Helicobacter pylori (strain J99 / ATCC 700824) (Campylobacter pylori J99)).